The primary structure comprises 372 residues: Putative actin-27 (372 aa).

Belongs to the actin family.

It is found in the cytoplasm. It localises to the cytoskeleton. The enzyme catalyses ATP + H2O = ADP + phosphate + H(+). Actins are highly conserved proteins that are involved in various types of cell motility and are ubiquitously expressed in all eukaryotic cells. Multiple isoforms are involved in various cellular functions such as cytoskeleton structure, cell mobility, chromosome movement and muscle contraction. The protein is Putative actin-27 (act27) of Dictyostelium discoideum (Social amoeba).